Reading from the N-terminus, the 472-residue chain is Adenosylhomocysteinase (472 aa).

Positions 61, 136, and 196 each coordinate substrate. Residue 197–199 (TTT) coordinates NAD(+). Positions 226 and 230 each coordinate substrate. Residues Asn-231, 260-265 (GYGDVG), Glu-283, Asn-318, 339-341 (IGH), and Asn-384 contribute to the NAD(+) site.

It belongs to the adenosylhomocysteinase family. NAD(+) serves as cofactor.

It localises to the cytoplasm. The catalysed reaction is S-adenosyl-L-homocysteine + H2O = L-homocysteine + adenosine. It functions in the pathway amino-acid biosynthesis; L-homocysteine biosynthesis; L-homocysteine from S-adenosyl-L-homocysteine: step 1/1. Functionally, may play a key role in the regulation of the intracellular concentration of adenosylhomocysteine. This Cupriavidus metallidurans (strain ATCC 43123 / DSM 2839 / NBRC 102507 / CH34) (Ralstonia metallidurans) protein is Adenosylhomocysteinase.